The following is a 172-amino-acid chain: dCTP deaminase, dUMP-forming (172 aa).

Residues 93 to 98 (RSSVGR), Asp111, 119 to 121 (TLE), Gln138, and Tyr151 each bind dCTP. Glu121 (proton donor/acceptor) is an active-site residue.

Belongs to the dCTP deaminase family. In terms of assembly, homotrimer.

The enzyme catalyses dCTP + 2 H2O = dUMP + NH4(+) + diphosphate. The protein operates within pyrimidine metabolism; dUMP biosynthesis; dUMP from dCTP: step 1/1. Bifunctional enzyme that catalyzes both the deamination of dCTP to dUTP and the hydrolysis of dUTP to dUMP without releasing the toxic dUTP intermediate. This Hathewaya histolytica (Clostridium histolyticum) protein is dCTP deaminase, dUMP-forming.